A 398-amino-acid chain; its full sequence is Elongation factor Tu (398 aa).

The tr-type G domain occupies 10-207 (KPHVNIGTIG…TVDEYIPEPE (198 aa)). A G1 region spans residues 19–26 (GHVDHGKT). 19 to 26 (GHVDHGKT) contributes to the GTP binding site. A Mg(2+)-binding site is contributed by T26. Residues 63–67 (GITIN) form a G2 region. The tract at residues 84–87 (DAPG) is G3. GTP-binding positions include 84–88 (DAPGH) and 139–142 (NKVD). The tract at residues 139–142 (NKVD) is G4. The segment at 177-179 (SAL) is G5.

The protein belongs to the TRAFAC class translation factor GTPase superfamily. Classic translation factor GTPase family. EF-Tu/EF-1A subfamily. Monomer.

The protein localises to the cytoplasm. It catalyses the reaction GTP + H2O = GDP + phosphate + H(+). Its function is as follows. GTP hydrolase that promotes the GTP-dependent binding of aminoacyl-tRNA to the A-site of ribosomes during protein biosynthesis. This is Elongation factor Tu from Streptococcus suis (strain 98HAH33).